A 94-amino-acid chain; its full sequence is ATP-dependent Clp protease adapter protein ClpS (94 aa).

It belongs to the ClpS family. In terms of assembly, binds to the N-terminal domain of the chaperone ClpA.

Involved in the modulation of the specificity of the ClpAP-mediated ATP-dependent protein degradation. The polypeptide is ATP-dependent Clp protease adapter protein ClpS (Thermosynechococcus vestitus (strain NIES-2133 / IAM M-273 / BP-1)).